We begin with the raw amino-acid sequence, 199 residues long: MPKVGMPEIRKPQLVKATMSVIDRVGLHAASISLISKEAGVSTGIINHYFGGKHGLLEETMREILRQLSATIKENLSQLPADAHHQRINAIIDGNFVGFQAENQVAKTWLAFWSYSMHDAQLKRLQRVNERRLLSHLKKELKALLDQDQAELVAHGIASLIDGIWLRGTLNPQGIDAEKARVIINDYLDKQLTFYSKLK.

The 61-residue stretch at 8–68 folds into the HTH tetR-type domain; sequence EIRKPQLVKA…ETMREILRQL (61 aa). Positions 31–50 form a DNA-binding region, H-T-H motif; it reads SISLISKEAGVSTGIINHYF.

The protein operates within amine and polyamine biosynthesis; betaine biosynthesis via choline pathway [regulation]. In terms of biological role, repressor involved in the biosynthesis of the osmoprotectant glycine betaine. It represses transcription of the choline transporter BetT and the genes of BetAB involved in the synthesis of glycine betaine. The chain is HTH-type transcriptional regulator BetI from Vibrio campbellii (strain ATCC BAA-1116).